Consider the following 778-residue polypeptide: Ent-trachylobane synthase KSL2, chloroplastic (778 aa).

The N-terminal 37 residues, Met-1 to Ile-37, are a transit peptide targeting the chloroplast. The Mg(2+) site is built by Asp-529, Asp-533, Asn-672, Asp-673, and Asp-680. The short motif at Asp-529–Asp-533 is the DDXXD motif element.

The protein belongs to the terpene synthase family. The cofactor is Mg(2+).

Its subcellular location is the plastid. It is found in the chloroplast. It catalyses the reaction ent-copalyl diphosphate = ent-trachylobane + diphosphate. The enzyme catalyses ent-copalyl diphosphate = ent-kaur-16-ene + diphosphate. The protein operates within secondary metabolite biosynthesis; terpenoid biosynthesis. Diterpene cyclase involved in the biosynthesis of labdane-related diterpenoids (LRDs) natural products. Catalyzes the cyclization of ent-CDP into ent-trachylobane as a major and ent-kaurene as a minor product. The sequence is that of Ent-trachylobane synthase KSL2, chloroplastic from Ricinus communis (Castor bean).